The sequence spans 659 residues: RNA polymerase II subunit A C-terminal domain phosphatase (659 aa).

One can recognise an FCP1 homology domain in the interval 139-303 (ITNRKLVLLV…KNSKEQMPVQ (165 aa)). The BRCT domain maps to 351-443 (ERHKVLDGCV…LKADENLFQL (93 aa)). A compositionally biased stretch (acidic residues) spans 484 to 504 (ALSDDEDDGDNEDEDDDGNDV). The interval 484–640 (ALSDDEDDGD…PESDDDDEFE (157 aa)) is disordered. Residues 505–519 (GEDKGDENLEEKQEK) are compositionally biased toward basic and acidic residues. Positions 529 to 538 (QNGSVENQSG) are enriched in polar residues. Acidic residues-rich tracts occupy residues 560 to 576 (MEDE…DDDT), 596 to 607 (ENEDDAVFDVDD), and 616 to 640 (IDEE…DEFE).

The protein resides in the nucleus. It carries out the reaction O-phospho-L-seryl-[protein] + H2O = L-seryl-[protein] + phosphate. The catalysed reaction is O-phospho-L-threonyl-[protein] + H2O = L-threonyl-[protein] + phosphate. Functionally, during the late stages of oogenesis, dephosphorylates 'Ser-5' of the heptad repeats YSPTSPS in the C-terminal domain of the largest RNA polymerase II subunit ama-1. Similarly, dephosphorylates 'Ser-5' of ama-1 in early embryonic cells prior to the activation of the zygotic transcription program at the 4-cell embryonic stage. May dephosphorylate 'Ser-2' of the ama-1 heptad repeats YSPTSPS in embryonic somatic and germline cells. The sequence is that of RNA polymerase II subunit A C-terminal domain phosphatase from Caenorhabditis elegans.